Here is a 179-residue protein sequence, read N- to C-terminus: Large ribosomal subunit protein uL5 (179 aa).

This sequence belongs to the universal ribosomal protein uL5 family. As to quaternary structure, part of the 50S ribosomal subunit; part of the 5S rRNA/L5/L18/L25 subcomplex. Contacts the 5S rRNA and the P site tRNA. Forms a bridge to the 30S subunit in the 70S ribosome.

Functionally, this is one of the proteins that bind and probably mediate the attachment of the 5S RNA into the large ribosomal subunit, where it forms part of the central protuberance. In the 70S ribosome it contacts protein S13 of the 30S subunit (bridge B1b), connecting the 2 subunits; this bridge is implicated in subunit movement. Contacts the P site tRNA; the 5S rRNA and some of its associated proteins might help stabilize positioning of ribosome-bound tRNAs. The sequence is that of Large ribosomal subunit protein uL5 from Xylella fastidiosa (strain 9a5c).